The primary structure comprises 329 residues: Isoaspartyl peptidase/L-asparaginase (329 aa).

The Nucleophile role is filled by Thr173. Substrate-binding positions include 201–204 (RVSD) and 222–225 (TGVG).

It belongs to the Ntn-hydrolase family. As to quaternary structure, heterotetramer of two alpha and two beta chains arranged as a dimer of alpha/beta heterodimers. In terms of processing, cleaved into an alpha and beta chain by autocatalysis; this activates the enzyme. The N-terminal residue of the beta subunit is responsible for the nucleophile hydrolase activity.

It carries out the reaction Cleavage of a beta-linked Asp residue from the N-terminus of a polypeptide.. Degrades proteins damaged by L-isoaspartyl residue formation (also known as beta-Asp residues). Probably performs the final step in the degradation of the reserve polymer cyanophycin (depolymerizes the building block L-beta-Asp-Arg). Also has L-asparaginase activity. The sequence is that of Isoaspartyl peptidase/L-asparaginase from Synechocystis sp. (strain ATCC 27184 / PCC 6803 / Kazusa).